A 1310-amino-acid polypeptide reads, in one-letter code: Angiotensin-converting enzyme (1310 aa).

An N-terminal signal peptide occupies residues 1-33 (MGAAPGRRGPRLLRPPPPLLLLLLLLRPPPAAL). Residues 34–1260 (TLDPGLLPGD…GMNLDAQQAR (1227 aa)) lie on the Extracellular side of the membrane. 2 Peptidase M2 domains span residues 45-628 (AADE…LGWP) and 647-1226 (VTDE…LGWP). N-linked (GlcNAc...) asparagine glycans are attached at residues Asn59, Asn79, and Asn151. Cys162 and Cys170 form a disulfide bridge. Residue Tyr236 coordinates chloride. Residue Asn323 is glycosylated (N-linked (GlcNAc...) asparagine). Cys364 and Cys382 are disulfide-bonded. His395 contributes to the Zn(2+) binding site. Glu396 acts as the Proton acceptor 1 in catalysis. Positions 399 and 422 each coordinate Zn(2+). N-linked (GlcNAc...) asparagine glycans are attached at residues Asn449 and Asn513. His524 acts as the Proton donor 1 in catalysis. Arg533 lines the chloride pocket. Cys549 and Cys561 are oxidised to a cystine. 3 N-linked (GlcNAc...) asparagine glycosylation sites follow: Asn681, Asn699, and Asn718. An intrachain disulfide couples Cys761 to Cys767. Residues Arg795 and Tyr833 each coordinate chloride. An N-linked (GlcNAc...) asparagine glycan is attached at Asn946. An intrachain disulfide couples Cys961 to Cys979. His992 contributes to the Zn(2+) binding site. The Proton acceptor 2 role is filled by Glu993. Zn(2+) contacts are provided by His996 and Glu1020. Residues Trp1094 and Arg1098 each contribute to the chloride site. Residue His1122 is the Proton donor 2 of the active site. Chloride is bound at residue Arg1131. A disulfide bond links Cys1147 and Cys1159. N-linked (GlcNAc...) asparagine glycosylation occurs at Asn1195. Residues 1219–1260 (HGEKLGWPQYTWTPNSARSEGSLPDSGRVNFLGMNLDAQQAR) are juxtamembrane stalk. Residues 1261–1281 (VGQWVLLFLGVALLLASLGLT) form a helical membrane-spanning segment. Topologically, residues 1282–1310 (QRLFSIRYQSLRQPHHGPQFGSEVELRHS) are cytoplasmic. Phosphoserine is present on Ser1303.

Belongs to the peptidase M2 family. As to quaternary structure, monomer and homodimer; homodimerizes following binding to an inhibitor. Interacts with calmodulin (CALM1, CALM2 or CALM3); interaction takes place in the cytoplasmic region and regulates phosphorylation and proteolytic cleavage. The cofactor is Zn(2+). It depends on chloride as a cofactor. In terms of processing, N-glycosylated. Phosphorylated by CK2 on Ser-1303; which allows membrane retention. Phosphorylated on tyrosine residues on its extracellular part, promoting cleavage by secretase enzymes and formation of the soluble form (Angiotensin-converting enzyme, soluble form). Post-translationally, produced following proteolytic cleavage by secretase enzymes that cleave the transmembrane form in the juxtamembrane stalk region upstream of the transmembrane region. Cleavage can take place at different sites of the juxtamembrane stalk region. Testis-specific isoform is expressed in spermatocytes, adult testis.

Its subcellular location is the cell membrane. It is found in the cytoplasm. The protein localises to the secreted. The enzyme catalyses Release of a C-terminal dipeptide, oligopeptide-|-Xaa-Yaa, when Xaa is not Pro, and Yaa is neither Asp nor Glu. Thus, conversion of angiotensin I to angiotensin II, with increase in vasoconstrictor activity, but no action on angiotensin II.. It carries out the reaction angiotensin I + H2O = L-histidyl-L-leucine + angiotensin II. The catalysed reaction is bradykinin + H2O = L-Phe-L-Arg + bradykinin(1-7). It catalyses the reaction substance P + H2O = substance P(1-9) + L-Leu-L-Met-NH2. The enzyme catalyses substance P + H2O = substance P(1-8) + Gly-L-Leu-L-Met-NH2. It carries out the reaction substance P + H2O = L-Phe-L-Phe-Gly-L-Leu-L-Met-NH2 + substance P(1-6). The catalysed reaction is neurotensin + H2O = neurotensin(1-11) + L-isoleucyl-L-leucine. It catalyses the reaction goralatide + H2O = N-acetyl-L-seryl-L-aspartate + L-lysyl-L-proline. The enzyme catalyses Met-enkephalin + H2O = L-phenylalanyl-L-methionine + L-tyrosylglycylglycine. It carries out the reaction Leu-enkephalin + H2O = L-tyrosylglycylglycine + L-phenylalanyl-L-leucine. The catalysed reaction is Met-enkephalin-Arg-Phe + H2O = L-arginyl-L-phenylalanine + Met-enkephalin. With respect to regulation, the dipeptidyl carboxypeptidase activity is strongly activated by chloride. Specifically inhibited by lisinopril. Inhibited by mixanpril, an orally-active drug used for the treatment of hypertension. Its activity is regulated as follows. Strongly inhibited by lisinopril and captopril. Dipeptidyl carboxypeptidase that removes dipeptides from the C-terminus of a variety of circulating hormones, such as angiotensin I, bradykinin or enkephalins, thereby playing a key role in the regulation of blood pressure, electrolyte homeostasis or synaptic plasticity. Composed of two similar catalytic domains, each possessing a functional active site, with different selectivity for substrates. Plays a major role in the angiotensin-renin system that regulates blood pressure and sodium retention by the kidney by converting angiotensin I to angiotensin II, resulting in an increase of the vasoconstrictor activity of angiotensin. Also able to inactivate bradykinin, a potent vasodilator, and therefore enhance the blood pressure response. Acts as a regulator of synaptic transmission by mediating cleavage of neuropeptide hormones, such as substance P, neurotensin or enkephalins. Catalyzes degradation of different enkephalin neuropeptides (Met-enkephalin, Leu-enkephalin, Met-enkephalin-Arg-Phe and possibly Met-enkephalin-Arg-Gly-Leu). Acts as a regulator of synaptic plasticity in the nucleus accumbens of the brain by mediating cleavage of Met-enkephalin-Arg-Phe, a strong ligand of Mu-type opioid receptor OPRM1, into Met-enkephalin. Met-enkephalin-Arg-Phe cleavage by ACE decreases activation of OPRM1, leading to long-term synaptic potentiation of glutamate release. Also acts as a regulator of hematopoietic stem cell differentiation by mediating degradation of hemoregulatory peptide N-acetyl-SDKP (AcSDKP). Acts as a regulator of cannabinoid signaling pathway by mediating degradation of hemopressin, an antagonist peptide of the cannabinoid receptor CNR1. Involved in amyloid-beta metabolism by catalyzing degradation of Amyloid-beta protein 40 and Amyloid-beta protein 42 peptides, thereby preventing plaque formation. Catalyzes cleavage of cholecystokinin (maturation of Cholecystokinin-8 and Cholecystokinin-5) and Gonadoliberin-1 (both maturation and degradation) hormones. Degradation of hemoregulatory peptide N-acetyl-SDKP (AcSDKP) and amyloid-beta proteins is mediated by the N-terminal catalytic domain, while angiotensin I and cholecystokinin cleavage is mediated by the C-terminal catalytic region. In terms of biological role, soluble form that is released in blood plasma and other body fluids following proteolytic cleavage in the juxtamembrane stalk region. Its function is as follows. Isoform produced by alternative promoter usage that is specifically expressed in spermatocytes and adult testis, and which is required for male fertility. In contrast to somatic isoforms, only contains one catalytic domain. Acts as a dipeptidyl carboxypeptidase that removes dipeptides from the C-terminus of substrates. The identity of substrates that are needed for male fertility is unknown. May also have a glycosidase activity which releases GPI-anchored proteins from the membrane by cleaving the mannose linkage in the GPI moiety. The GPIase activity was reported to be essential for the egg-binding ability of the sperm. This activity is however unclear and has been challenged by other groups, suggesting that it may be indirect. This Oryctolagus cuniculus (Rabbit) protein is Angiotensin-converting enzyme.